Here is a 635-residue protein sequence, read N- to C-terminus: Glutamine--fructose-6-phosphate aminotransferase [isomerizing] (635 aa).

Residue cysteine 2 is the Nucleophile; for GATase activity of the active site. The Glutamine amidotransferase type-2 domain maps to 2-218; that stretch reads CGIVGMVAGR…EGDIADVHRD (217 aa). SIS domains are found at residues 299–439 and 472–625; these read FERL…AKKI and CARH…IDQP. Lysine 630 functions as the For Fru-6P isomerization activity in the catalytic mechanism.

In terms of assembly, homodimer.

The protein localises to the cytoplasm. It carries out the reaction D-fructose 6-phosphate + L-glutamine = D-glucosamine 6-phosphate + L-glutamate. Functionally, catalyzes the first step in hexosamine metabolism, converting fructose-6P into glucosamine-6P using glutamine as a nitrogen source. This Treponema pallidum (strain Nichols) protein is Glutamine--fructose-6-phosphate aminotransferase [isomerizing].